The following is a 486-amino-acid chain: FAD-dependent oxidoreductase domain-containing protein 1 (486 aa).

The chain crosses the membrane as a helical span at residues 62-82 (EHSDVVIVGGGVLGLSVAYWL).

Associates with components of the mitochondrial respiratory chain complex I. It depends on FAD as a cofactor.

The protein localises to the mitochondrion inner membrane. Functionally, required for the assembly of the mitochondrial membrane respiratory chain NADH dehydrogenase (Complex I). Involved in mid-late stages of complex I assembly. This is FAD-dependent oxidoreductase domain-containing protein 1 from Homo sapiens (Human).